The chain runs to 414 residues: Phospholipase A1-IIbeta (414 aa).

Lys19 is covalently cross-linked (Glycyl lysine isopeptide (Lys-Gly) (interchain with G-Cter in ubiquitin)). Residues 191–217 (DKTSAQEQVQEELKRLLELYKNEDVTI) adopt a coiled-coil conformation. The active-site Acyl-ester intermediate is Ser223. Residues Ser223, Asp289, and His326 each act as charge relay system in the active site. Residues 386-414 (DGTWKLNGDRSKKKQEEEDEKEENNCKFP) are disordered. Positions 390-410 (KLNGDRSKKKQEEEDEKEENN) form a coiled coil. Over residues 392-401 (NGDRSKKKQE) the composition is skewed to basic and acidic residues.

The protein belongs to the AB hydrolase superfamily. Lipase family.

Its subcellular location is the cytoplasm. Acylhydrolase that catalyzes the hydrolysis of phospholipids at the sn-1 position. This chain is Phospholipase A1-IIbeta, found in Arabidopsis thaliana (Mouse-ear cress).